The sequence spans 367 residues: Flagellar P-ring protein (367 aa).

Residues 1-21 form the signal peptide; sequence MYVFKALAGIVLALVATLAHA.

It belongs to the FlgI family. The basal body constitutes a major portion of the flagellar organelle and consists of four rings (L,P,S, and M) mounted on a central rod.

The protein localises to the periplasm. It localises to the bacterial flagellum basal body. Its function is as follows. Assembles around the rod to form the L-ring and probably protects the motor/basal body from shearing forces during rotation. The protein is Flagellar P-ring protein of Salmonella arizonae (strain ATCC BAA-731 / CDC346-86 / RSK2980).